The chain runs to 1129 residues: Phytochrome A type 4 (1129 aa).

Residues 1–21 are compositionally biased toward low complexity; it reads MSSSRPASSSSSRNRQSSRAR. The interval 1–24 is disordered; that stretch reads MSSSRPASSSSSRNRQSSRARVLA. Residues 217-402 form the GAF domain; the sequence is SMEVLCNTVV…VFAVHVNREF (186 aa). Cys322 is a binding site for phytochromobilin. PAS domains lie at 618 to 688 and 748 to 822; these read VTSE…LQGK and VEGD…VSLC. Residues 902–1122 form the Histidine kinase domain; it reads YMRHAINNPL…TFILTAELAS (221 aa).

The protein belongs to the phytochrome family. As to quaternary structure, homodimer. Post-translationally, contains one covalently linked phytochromobilin chromophore.

Its function is as follows. Regulatory photoreceptor which exists in two forms that are reversibly interconvertible by light: the Pr form that absorbs maximally in the red region of the spectrum and the Pfr form that absorbs maximally in the far-red region. Photoconversion of Pr to Pfr induces an array of morphogenic responses, whereas reconversion of Pfr to Pr cancels the induction of those responses. Pfr controls the expression of a number of nuclear genes including those encoding the small subunit of ribulose-bisphosphate carboxylase, chlorophyll A/B binding protein, protochlorophyllide reductase, rRNA, etc. It also controls the expression of its own gene(s) in a negative feedback fashion. This Avena sativa (Oat) protein is Phytochrome A type 4 (PHYA4).